A 218-amino-acid polypeptide reads, in one-letter code: Vacuolar protein-sorting-associated protein 37 homolog 2 (218 aa).

The tract at residues 1 to 51 (MFNFWGSKEQQQGQSRPSPEASATPWYSPSLVTSPSSSRPQTSGQIPSHVS) is disordered. Positions 8–17 (KEQQQGQSRP) are enriched in polar residues. The segment covering 28–40 (SPSLVTSPSSSRP) has biased composition (low complexity). Residues 137–218 (QEKLNELENQ…HLAAKTSSIG (82 aa)) enclose the VPS37 C-terminal domain.

Belongs to the VPS37 family. Component of the endosomal sorting required for transport complex I (ESCRT-I), composed of ELC, VPS28 and VPS37. Interacts with ELC.

The protein localises to the endosome. Functionally, component of the ESCRT-I complex (endosomal sorting complex required for transport I), a regulator of vesicular trafficking process. Required for the sorting of endocytic ubiquitinated cargos into multivesicular bodies (MVBs). This chain is Vacuolar protein-sorting-associated protein 37 homolog 2 (VPS37-2), found in Arabidopsis thaliana (Mouse-ear cress).